The chain runs to 625 residues: 1-deoxy-D-xylulose-5-phosphate synthase (625 aa).

Thiamine diphosphate-binding positions include histidine 74 and 115 to 117; that span reads GHS. Aspartate 146 serves as a coordination point for Mg(2+). Thiamine diphosphate-binding positions include 147–148, asparagine 175, tyrosine 286, and glutamate 367; that span reads GA. A Mg(2+)-binding site is contributed by asparagine 175.

It belongs to the transketolase family. DXPS subfamily. As to quaternary structure, homodimer. It depends on Mg(2+) as a cofactor. Requires thiamine diphosphate as cofactor.

It catalyses the reaction D-glyceraldehyde 3-phosphate + pyruvate + H(+) = 1-deoxy-D-xylulose 5-phosphate + CO2. It participates in metabolic intermediate biosynthesis; 1-deoxy-D-xylulose 5-phosphate biosynthesis; 1-deoxy-D-xylulose 5-phosphate from D-glyceraldehyde 3-phosphate and pyruvate: step 1/1. Catalyzes the acyloin condensation reaction between C atoms 2 and 3 of pyruvate and glyceraldehyde 3-phosphate to yield 1-deoxy-D-xylulose-5-phosphate (DXP). The chain is 1-deoxy-D-xylulose-5-phosphate synthase from Lachnoclostridium phytofermentans (strain ATCC 700394 / DSM 18823 / ISDg) (Clostridium phytofermentans).